The sequence spans 454 residues: tRNA modification GTPase MnmE (454 aa).

3 residues coordinate (6S)-5-formyl-5,6,7,8-tetrahydrofolate: Arg-23, Glu-80, and Lys-120. One can recognise a TrmE-type G domain in the interval 216 to 377 (GMKVVIAGKP…LRTHLKQSMG (162 aa)). A K(+)-binding site is contributed by Asn-226. GTP-binding positions include 226–231 (NAGKSS), 245–251 (TAIAGTT), 270–273 (DTAG), and 335–338 (NKAD). Residue Ser-230 participates in Mg(2+) binding. K(+)-binding residues include Thr-245, Ile-247, and Thr-250. Thr-251 serves as a coordination point for Mg(2+). Lys-454 is a binding site for (6S)-5-formyl-5,6,7,8-tetrahydrofolate.

This sequence belongs to the TRAFAC class TrmE-Era-EngA-EngB-Septin-like GTPase superfamily. TrmE GTPase family. In terms of assembly, homodimer. Heterotetramer of two MnmE and two MnmG subunits. The cofactor is K(+).

The protein resides in the cytoplasm. Exhibits a very high intrinsic GTPase hydrolysis rate. Involved in the addition of a carboxymethylaminomethyl (cmnm) group at the wobble position (U34) of certain tRNAs, forming tRNA-cmnm(5)s(2)U34. This is tRNA modification GTPase MnmE from Sodalis glossinidius (strain morsitans).